Consider the following 344-residue polypeptide: Arginine N-succinyltransferase (344 aa).

Leucine 125 contacts succinyl-CoA. The active-site Proton donor is the histidine 229.

The protein belongs to the arginine N-succinyltransferase family.

It catalyses the reaction succinyl-CoA + L-arginine = N(2)-succinyl-L-arginine + CoA + H(+). Its pathway is amino-acid degradation; L-arginine degradation via AST pathway; L-glutamate and succinate from L-arginine: step 1/5. Functionally, catalyzes the transfer of succinyl-CoA to arginine to produce N(2)-succinylarginine. The polypeptide is Arginine N-succinyltransferase (Escherichia coli O157:H7).